The following is a 221-amino-acid chain: Translation initiation factor 6 (221 aa).

It belongs to the eIF-6 family.

Binds to the 50S ribosomal subunit and prevents its association with the 30S ribosomal subunit to form the 70S initiation complex. This is Translation initiation factor 6 from Halorubrum lacusprofundi (strain ATCC 49239 / DSM 5036 / JCM 8891 / ACAM 34).